A 447-amino-acid chain; its full sequence is Serine/threonine-protein phosphatase 2A 55 kDa regulatory subunit B gamma isoform (447 aa).

7 WD repeats span residues 22-61, 87-128, 171-209, 220-260, 279-317, 334-375, and 410-446; these read TEAD…KNAP, EIEE…KRPE, GHTY…RSFN, DLTE…LCDK, EIIS…RPIE, ENDC…DVTL, and DFTK…NSDM.

It belongs to the phosphatase 2A regulatory subunit B family. As to quaternary structure, PP2A consists of a common heterodimeric core enzyme, composed of a 36 kDa catalytic subunit (subunit C) and a 65 kDa constant regulatory subunit (PR65 or subunit A), that associates with a variety of regulatory subunits. Proteins that associate with the core dimer include three families of regulatory subunits B (the R2/B/PR55/B55, R3/B''/PR72/PR130/PR59 and R5/B'/B56 families), the 48 kDa variable regulatory subunit, viral proteins, and cell signaling molecules. Interacts with IER5.

The B regulatory subunit might modulate substrate selectivity and catalytic activity, and might also direct the localization of the catalytic enzyme to a particular subcellular compartment. This Homo sapiens (Human) protein is Serine/threonine-protein phosphatase 2A 55 kDa regulatory subunit B gamma isoform (PPP2R2C).